Here is a 123-residue protein sequence, read N- to C-terminus: uncharacterized protein (123 aa).

In terms of domain architecture, Rhodanese spans 17–117 (LNNNAFLVDV…NNQDKGWKQN (101 aa)).

This is an uncharacterized protein from Rickettsia prowazekii (strain Madrid E).